A 519-amino-acid chain; its full sequence is Ribonuclease Y 1 (519 aa).

Residues 2 to 22 (IILYIILAIIAIVVGYCAGFF) traverse the membrane as a helical segment. Positions 84–113 (QKQEDRLLQREDSLDRKDNSFEKRENSLER) are disordered. In terms of domain architecture, KH spans 209–294 (TITVVSLPND…EMVEKAKKEM (86 aa)). The region spanning 335 to 428 (VLNHSIEVAN…VAAANSISAA (94 aa)) is the HD domain.

Belongs to the RNase Y family.

The protein localises to the cell membrane. Endoribonuclease that initiates mRNA decay. The polypeptide is Ribonuclease Y 1 (Pediococcus pentosaceus (strain ATCC 25745 / CCUG 21536 / LMG 10740 / 183-1w)).